The chain runs to 150 residues: 3-hydroxyacyl-[acyl-carrier-protein] dehydratase FabZ (150 aa).

The active site involves histidine 54.

The protein belongs to the thioester dehydratase family. FabZ subfamily.

It localises to the cytoplasm. The enzyme catalyses a (3R)-hydroxyacyl-[ACP] = a (2E)-enoyl-[ACP] + H2O. Its function is as follows. Involved in unsaturated fatty acids biosynthesis. Catalyzes the dehydration of short chain beta-hydroxyacyl-ACPs and long chain saturated and unsaturated beta-hydroxyacyl-ACPs. The chain is 3-hydroxyacyl-[acyl-carrier-protein] dehydratase FabZ from Colwellia psychrerythraea (strain 34H / ATCC BAA-681) (Vibrio psychroerythus).